Consider the following 171-residue polypeptide: O-acetyl-ADP-ribose deacetylase 1 (171 aa).

A Macro domain is found at 1-171 (MKKITVIQGD…NYDLYLKLLN (171 aa)). Substrate is bound by residues 10-11 (DI), N24, 32-34 (GVD), and 121-125 (STGIY). D34 serves as the catalytic Proton acceptor.

The protein belongs to the MacroD-type family. YmdB subfamily. Homodimer. Interacts with RNase III.

The enzyme catalyses 3''-O-acetyl-ADP-D-ribose + H2O = ADP-D-ribose + acetate + H(+). It carries out the reaction 2''-O-acetyl-ADP-D-ribose + H2O = ADP-D-ribose + acetate + H(+). In terms of biological role, deacetylates O-acetyl-ADP ribose to yield ADP-ribose and free acetate. Down-regulates ribonuclease 3 (RNase III) activity. Acts by interacting directly with the region of the ribonuclease that is required for dimerization/activation. The protein is O-acetyl-ADP-ribose deacetylase 1 of Pantoea vagans (strain C9-1) (Pantoea agglomerans (strain C9-1)).